A 259-amino-acid polypeptide reads, in one-letter code: UPF0246 protein Avin_11220 (259 aa).

It belongs to the UPF0246 family.

This chain is UPF0246 protein Avin_11220, found in Azotobacter vinelandii (strain DJ / ATCC BAA-1303).